The following is a 91-amino-acid chain: Small ribosomal subunit protein uS17 (91 aa).

The protein belongs to the universal ribosomal protein uS17 family. In terms of assembly, part of the 30S ribosomal subunit.

Its function is as follows. One of the primary rRNA binding proteins, it binds specifically to the 5'-end of 16S ribosomal RNA. The chain is Small ribosomal subunit protein uS17 from Thermobifida fusca (strain YX).